The following is a 210-amino-acid chain: Proteasome subunit beta (210 aa).

A propeptide spans M1 to G9 (removed in mature form; by autocatalysis). The active-site Nucleophile is the T10.

It belongs to the peptidase T1B family. The 20S proteasome core is composed of 14 alpha and 14 beta subunits that assemble into four stacked heptameric rings, resulting in a barrel-shaped structure. The two inner rings, each composed of seven catalytic beta subunits, are sandwiched by two outer rings, each composed of seven alpha subunits. The catalytic chamber with the active sites is on the inside of the barrel. Has a gated structure, the ends of the cylinder being occluded by the N-termini of the alpha-subunits. Is capped at one or both ends by the proteasome regulatory ATPase, PAN.

The protein localises to the cytoplasm. It carries out the reaction Cleavage of peptide bonds with very broad specificity.. Its activity is regulated as follows. The formation of the proteasomal ATPase PAN-20S proteasome complex, via the docking of the C-termini of PAN into the intersubunit pockets in the alpha-rings, triggers opening of the gate for substrate entry. Interconversion between the open-gate and close-gate conformations leads to a dynamic regulation of the 20S proteasome proteolysis activity. Its function is as follows. Component of the proteasome core, a large protease complex with broad specificity involved in protein degradation. In Methanohalophilus mahii (strain ATCC 35705 / DSM 5219 / SLP), this protein is Proteasome subunit beta.